We begin with the raw amino-acid sequence, 520 residues long: Cyclic AMP-responsive element-binding protein 3-like protein 2 (520 aa).

The Cytoplasmic segment spans residues 1-378 (MEVLESGEQG…CKLAGTQTGT (378 aa)). Serine 93 is subject to Phosphoserine. A Glycyl lysine isopeptide (Lys-Gly) (interchain with G-Cter in SUMO2) cross-link involves residue lysine 178. Serine 191 carries the phosphoserine modification. The disordered stretch occupies residues 195-264 (APVDHLHLPP…PHKLQGSGPL (70 aa)). Composition is skewed to low complexity over residues 208–220 (SSHG…SLSP) and 234–255 (SPSR…LTAP). The bZIP domain maps to 294-357 (ALKKIRRKIK…RTLLQQLQKL (64 aa)). The tract at residues 296 to 325 (KKIRRKIKNKISAQESRRKKKEYMDSLEKK) is basic motif. Residues 336–357 (LRKKVEVLENTNRTLLQQLQKL) are leucine-zipper. Residues 379–399 (CLMVVVLCFAVAFGSFFQGYG) traverse the membrane as a helical; Signal-anchor for type II membrane protein segment. At 400–520 (PYPSATKMAL…ELDRRVNTTF (121 aa)) the chain is on the lumenal side. The S1P recognition signature appears at 427–430 (RNLL). 3 N-linked (GlcNAc...) asparagine glycosylation sites follow: asparagine 480, asparagine 504, and asparagine 517.

This sequence belongs to the bZIP family. ATF subfamily. In terms of assembly, binds DNA as a dimer. Upon ER stress, translocated to the Golgi apparatus, where it is processed by regulated intramembrane proteolysis (RIP) to release the cytosol-facing N-terminal transcription factor domain. The cleavage is performed sequentially by site-1 and site-2 proteases (S1P/MBTPS1 and S2P/MBTPS2). In terms of processing, N-glycosylated. Post-translationally, ubiquitinated by HRD1/SYVN1; undergoes 'Lys-48'-linked ubiquitination, followed by rapid proteasomal degradation under normal conditions. Upon ER stress, SYVN1 E3 ubiquitin-protein ligase dissociates from its substrate, ubiquitination does not occur and CREB3L2 is stabilized.

The protein localises to the endoplasmic reticulum membrane. Its subcellular location is the nucleus. Transcription factor involved in unfolded protein response (UPR). In the absence of endoplasmic reticulum (ER) stress, inserted into ER membranes, with N-terminal DNA-binding and transcription activation domains oriented toward the cytosolic face of the membrane. In response to ER stress, transported to the Golgi, where it is cleaved in a site-specific manner by resident proteases S1P/MBTPS1 and S2P/MBTPS2. The released N-terminal cytosolic domain is translocated to the nucleus to effect transcription of specific target genes. Plays a critical role in chondrogenesis by activating the transcription of SEC23A, which promotes the transport and secretion of cartilage matrix proteins, and possibly that of ER biogenesis-related genes. In a neuroblastoma cell line, protects cells from ER stress-induced death. In vitro activates transcription of target genes via direct binding to the CRE site. This is Cyclic AMP-responsive element-binding protein 3-like protein 2 (CREB3L2) from Pongo abelii (Sumatran orangutan).